We begin with the raw amino-acid sequence, 274 residues long: Thiamine kinase (274 aa).

It belongs to the thiamine kinase family.

It catalyses the reaction thiamine + ATP = thiamine phosphate + ADP + H(+). It functions in the pathway cofactor biosynthesis; thiamine diphosphate biosynthesis; thiamine phosphate from thiamine: step 1/1. In terms of biological role, catalyzes the ATP-dependent phosphorylation of thiamine to thiamine phosphate. Is involved in thiamine salvage. In Salmonella newport (strain SL254), this protein is Thiamine kinase.